We begin with the raw amino-acid sequence, 205 residues long: Thymidylate kinase (205 aa).

Position 11–18 (11–18 (GLDKSGKT)) interacts with ATP.

The protein belongs to the thymidylate kinase family. In terms of assembly, homodimer; the dimer arrangement is orthogonal and not antiparallel as in human enzyme.

The enzyme catalyses dTMP + ATP = dTDP + ADP. It functions in the pathway pyrimidine metabolism; dTTP biosynthesis. Its function is as follows. Poxvirus TMP kinase is able to phosphorylate dTMP, dUMP and also dGMP from any purine and pyrimidine nucleoside triphosphate. The large substrate specificity is explained by the presence of a canal connecting the edge of the dimer interface to the TMP base binding pocket, canal not found in the human homolog. The chain is Thymidylate kinase (OPG178) from Homo sapiens (Human).